We begin with the raw amino-acid sequence, 411 residues long: LL-diaminopimelate aminotransferase (411 aa).

Residues Y15 and G42 each contribute to the substrate site. Pyridoxal 5'-phosphate is bound by residues Y72, 108 to 109, Y132, N187, Y218, and 246 to 248; these read SK and SFS. Substrate is bound by residues K109, Y132, and N187. The residue at position 249 (K249) is an N6-(pyridoxal phosphate)lysine. Pyridoxal 5'-phosphate contacts are provided by R257 and N292. Substrate is bound by residues N292 and R388.

Belongs to the class-I pyridoxal-phosphate-dependent aminotransferase family. LL-diaminopimelate aminotransferase subfamily. Homodimer. It depends on pyridoxal 5'-phosphate as a cofactor.

It carries out the reaction (2S,6S)-2,6-diaminopimelate + 2-oxoglutarate = (S)-2,3,4,5-tetrahydrodipicolinate + L-glutamate + H2O + H(+). The protein operates within amino-acid biosynthesis; L-lysine biosynthesis via DAP pathway; LL-2,6-diaminopimelate from (S)-tetrahydrodipicolinate (aminotransferase route): step 1/1. Functionally, involved in the synthesis of meso-diaminopimelate (m-DAP or DL-DAP), required for both lysine and peptidoglycan biosynthesis. Catalyzes the direct conversion of tetrahydrodipicolinate to LL-diaminopimelate. The polypeptide is LL-diaminopimelate aminotransferase (Trichodesmium erythraeum (strain IMS101)).